A 105-amino-acid chain; its full sequence is Small ribosomal subunit protein uS10 (105 aa).

It belongs to the universal ribosomal protein uS10 family. In terms of assembly, part of the 30S ribosomal subunit.

Involved in the binding of tRNA to the ribosomes. The sequence is that of Small ribosomal subunit protein uS10 from Roseobacter denitrificans (strain ATCC 33942 / OCh 114) (Erythrobacter sp. (strain OCh 114)).